A 541-amino-acid chain; its full sequence is Phosphoenolpyruvate carboxykinase (ATP) (541 aa).

Positions 67, 207, and 213 each coordinate substrate. ATP contacts are provided by residues K213, H232, and 248–256 (GLSGTGKTT). Residues K213 and H232 each coordinate Mn(2+). D269 provides a ligand contact to Mn(2+). Residues E297, R333, 449–450 (RI), and T455 each bind ATP. R333 lines the substrate pocket.

This sequence belongs to the phosphoenolpyruvate carboxykinase (ATP) family. As to quaternary structure, monomer. It depends on Mn(2+) as a cofactor.

It is found in the cytoplasm. The enzyme catalyses oxaloacetate + ATP = phosphoenolpyruvate + ADP + CO2. It functions in the pathway carbohydrate biosynthesis; gluconeogenesis. Its function is as follows. Involved in the gluconeogenesis. Catalyzes the conversion of oxaloacetate (OAA) to phosphoenolpyruvate (PEP) through direct phosphoryl transfer between the nucleoside triphosphate and OAA. This Aliivibrio salmonicida (strain LFI1238) (Vibrio salmonicida (strain LFI1238)) protein is Phosphoenolpyruvate carboxykinase (ATP).